The primary structure comprises 253 residues: MPIKPVGWICGQVLKNFSGRIEGIQKVIMDLIDEFKDEFPTILRLSQSNQKREPMQKPSKIRMAIALAKINRGTLIQGLNSISRSSKSVAKLLQPQLACRLLELRAISHRLLKEVNAPRQPLYNIQVRKGSLFEIISFPAKTALTSIMCASYAALIYLTVCVNAVLEKIMKIFQEEESIRQNREESENFRNAFSEPVLSEPLFPEGEIKAKPYRSLPEKPDSISDRPKLPANKLSNKIQVLHSVFDQSAEMNE.

Residues 144 to 166 (LTSIMCASYAALIYLTVCVNAVL) form a helical membrane-spanning segment. Basic and acidic residues predominate over residues 210-228 (AKPYRSLPEKPDSISDRPK). Residues 210-231 (AKPYRSLPEKPDSISDRPKLPA) form a disordered region.

Its subcellular location is the membrane. Functionally, may play at role in testicular development/spermatogenesis and may be an important factor in male infertility. This Bos taurus (Bovine) protein is Spermatogenesis-associated protein 9 (SPATA9).